Here is a 296-residue protein sequence, read N- to C-terminus: 4-hydroxybenzoate octaprenyltransferase (296 aa).

8 helical membrane passes run 28–48, 52–72, 102–122, 146–166, 169–189, 219–239, 241–261, and 275–295; these read PIGI…AAEG, LSHV…GCAI, ALIL…CTNA, YYPQ…TFTA, GELP…TVGY, VIIL…GARF, LGGW…WEFW, and FLHN…DYAL.

It belongs to the UbiA prenyltransferase family. Requires Mg(2+) as cofactor.

Its subcellular location is the cell inner membrane. The catalysed reaction is all-trans-octaprenyl diphosphate + 4-hydroxybenzoate = 4-hydroxy-3-(all-trans-octaprenyl)benzoate + diphosphate. It participates in cofactor biosynthesis; ubiquinone biosynthesis. Catalyzes the prenylation of para-hydroxybenzoate (PHB) with an all-trans polyprenyl group. Mediates the second step in the final reaction sequence of ubiquinone-8 (UQ-8) biosynthesis, which is the condensation of the polyisoprenoid side chain with PHB, generating the first membrane-bound Q intermediate 3-octaprenyl-4-hydroxybenzoate. The chain is 4-hydroxybenzoate octaprenyltransferase from Pseudomonas fluorescens (strain ATCC BAA-477 / NRRL B-23932 / Pf-5).